We begin with the raw amino-acid sequence, 204 residues long: Cytochrome c biogenesis ATP-binding export protein CcmA (204 aa).

Residues 2–204 form the ABC transporter domain; the sequence is IEVRDLGVSR…LDAEDLGGFL (203 aa). 34–41 is a binding site for ATP; that stretch reads GPNGIGKT.

Belongs to the ABC transporter superfamily. CcmA exporter (TC 3.A.1.107) family. The complex is composed of two ATP-binding proteins (CcmA) and two transmembrane proteins (CcmB).

The protein resides in the cell inner membrane. The catalysed reaction is heme b(in) + ATP + H2O = heme b(out) + ADP + phosphate + H(+). In terms of biological role, part of the ABC transporter complex CcmAB involved in the biogenesis of c-type cytochromes; once thought to export heme, this seems not to be the case, but its exact role is uncertain. Responsible for energy coupling to the transport system. The protein is Cytochrome c biogenesis ATP-binding export protein CcmA of Ruegeria sp. (strain TM1040) (Silicibacter sp.).